The primary structure comprises 419 residues: Mitochondrial chaperone BCS1 (419 aa).

Topologically, residues 2-15 (PLSDFILALKDNPY) are mitochondrial intermembrane. A helical membrane pass occupies residues 16–32 (FGAGFGLVGVGTALALA). Topologically, residues 33–419 (RKGVQLGLVA…AIHNAESLRR (387 aa)) are mitochondrial matrix. Y181 bears the Phosphotyrosine mark. Residue 230–237 (GPPGCGKS) participates in ATP binding.

The protein belongs to the AAA ATPase family. BCS1 subfamily. As to quaternary structure, interacts with LETM1. As to expression, ubiquitous.

The protein localises to the mitochondrion inner membrane. The catalysed reaction is ATP + H2O = ADP + phosphate + H(+). In terms of biological role, chaperone necessary for the incorporation of Rieske iron-sulfur protein UQCRFS1 into the mitochondrial respiratory chain complex III. Plays an important role in the maintenance of mitochondrial tubular networks, respiratory chain assembly and formation of the LETM1 complex. The chain is Mitochondrial chaperone BCS1 (BCS1L) from Homo sapiens (Human).